The following is a 293-amino-acid chain: GDT1-like protein 3 (293 aa).

Positions 1–25 (MGLISNPTRLILVATIFFLVSSISG) are cleaved as a signal peptide. 6 helical membrane passes run 89-109 (FSMI…ALMA), 115-135 (ATVL…STGL), 148-168 (TNSA…YIAW), 200-220 (LFSR…FLAE), 238-258 (AIGV…LAVV), and 272-292 (VATV…FYPP).

This sequence belongs to the GDT1 family.

The protein localises to the membrane. The protein is GDT1-like protein 3 of Arabidopsis thaliana (Mouse-ear cress).